Consider the following 493-residue polypeptide: MSVSTALKLCIFFTGFAGIVAEYSLATLATYLLGNAVLQWSVVISIFLLSMGLGSHASRYIPDDKTPLAFVLAELFLSLLVPFSVPIAYHFANNFLHLQTVIYGLSFVIGSLIGLEIPLAVRINNMYEELKVNISSVLEKDYLGSVPAGLLYAYLFLPKLGLPLTAILAGFFNLISAFLLVKVLKPKKFLKFLAIFTFFLLATYAVGHKRITLYEEQKFYGEEIIHFEQTPYQKIVLTRFGKHYSLYLDGHLQFSTLDEKRYHETLVHVPASFLKRYEKALILGGGDGLALRELRKYPFGEIHLVDLDPKMIEFSKKNLVMRKINENSFYDTRLKVFSEDAFNFVKKTKEKYDFVIVDLIDPRTPSSARVYSLEFYMSLKNKLKEDGIFITQAGDTFYKREVFCSILKTIKKAGFYAYPLVVYIPTFGEWGMVIGSKEPLNFENFELKEKTEFLNRERALAFYTLGKSLECPNVEVNTLLKPVLIYYYYKIQN.

A run of 7 helical transmembrane segments spans residues 9–29 (LCIF…ATLA), 32–52 (LLGN…LSMG), 68–88 (LAFV…VPIA), 101–121 (VIYG…PLAV), 137–157 (VLEK…YLFL), 161–181 (GLPL…FLLV), and 188–208 (KFLK…AVGH). The interval 187–448 (KKFLKFLAIF…PLNFENFELK (262 aa)) is spermidine synthase. One can recognise a PABS domain in the interval 202–437 (ATYAVGHKRI…GEWGMVIGSK (236 aa)). Residue Q233 coordinates S-methyl-5'-thioadenosine. Spermidine contacts are provided by H263 and D287. S-methyl-5'-thioadenosine is bound by residues D306 and 340–341 (DA). The active-site Proton acceptor is the D358.

Belongs to the spermidine/spermine synthase family. As to quaternary structure, homodimer or homotetramer.

It localises to the cell membrane. The catalysed reaction is S-adenosyl 3-(methylsulfanyl)propylamine + putrescine = S-methyl-5'-thioadenosine + spermidine + H(+). It participates in amine and polyamine biosynthesis; spermidine biosynthesis; spermidine from putrescine: step 1/1. Catalyzes the irreversible transfer of a propylamine group from the amino donor S-adenosylmethioninamine (decarboxy-AdoMet) to putrescine (1,4-diaminobutane) to yield spermidine. The protein is Polyamine aminopropyltransferase 2 of Aquifex aeolicus (strain VF5).